Consider the following 541-residue polypeptide: Chaperonin GroEL (541 aa).

ATP contacts are provided by residues Thr-29–Pro-32, Asp-86–Thr-90, Gly-413, Asp-477–Leu-479, and Asp-493.

Belongs to the chaperonin (HSP60) family. In terms of assembly, forms a cylinder of 14 subunits composed of two heptameric rings stacked back-to-back. Interacts with the co-chaperonin GroES.

Its subcellular location is the cytoplasm. It carries out the reaction ATP + H2O + a folded polypeptide = ADP + phosphate + an unfolded polypeptide.. Together with its co-chaperonin GroES, plays an essential role in assisting protein folding. The GroEL-GroES system forms a nano-cage that allows encapsulation of the non-native substrate proteins and provides a physical environment optimized to promote and accelerate protein folding. The polypeptide is Chaperonin GroEL (Clostridium botulinum (strain Loch Maree / Type A3)).